The primary structure comprises 154 residues: Ribonuclease H (154 aa).

An RNase H type-1 domain is found at 1–142 (MLKQVEIFTD…CDELARRAAG (142 aa)). 4 residues coordinate Mg(2+): Asp10, Glu48, Asp70, and Asp134.

Belongs to the RNase H family. Monomer. Mg(2+) serves as cofactor.

It localises to the cytoplasm. The enzyme catalyses Endonucleolytic cleavage to 5'-phosphomonoester.. Endonuclease that specifically degrades the RNA of RNA-DNA hybrids. This Edwardsiella ictaluri (strain 93-146) protein is Ribonuclease H.